The chain runs to 185 residues: Ribosomal RNA small subunit methyltransferase G (185 aa).

Residues G59, F64, 110–111, and R127 each bind S-adenosyl-L-methionine; that span reads IQ.

It belongs to the methyltransferase superfamily. RNA methyltransferase RsmG family.

The protein resides in the cytoplasm. It carries out the reaction guanosine(527) in 16S rRNA + S-adenosyl-L-methionine = N(7)-methylguanosine(527) in 16S rRNA + S-adenosyl-L-homocysteine. Functionally, specifically methylates the N7 position of guanine in position 527 of 16S rRNA. This is Ribosomal RNA small subunit methyltransferase G from Helicobacter hepaticus (strain ATCC 51449 / 3B1).